The chain runs to 121 residues: Ribonuclease P protein component 4 (121 aa).

The Zn(2+) site is built by Cys63, Cys66, Cys89, and Cys92.

This sequence belongs to the eukaryotic/archaeal RNase P protein component 4 family. Consists of a catalytic RNA component and at least 4-5 protein subunits. It depends on Zn(2+) as a cofactor.

The protein resides in the cytoplasm. It catalyses the reaction Endonucleolytic cleavage of RNA, removing 5'-extranucleotides from tRNA precursor.. Functionally, part of ribonuclease P, a protein complex that generates mature tRNA molecules by cleaving their 5'-ends. The chain is Ribonuclease P protein component 4 from Methanobrevibacter smithii (strain ATCC 35061 / DSM 861 / OCM 144 / PS).